A 1117-amino-acid chain; its full sequence is Cytospin-A (1117 aa).

Disordered stretches follow at residues 1 to 176 (MKKA…NQIS), 293 to 323 (SLSPEITPGNQSDGGGTLTSSVEGSAPGSVE), and 358 to 390 (SSDDALDAPSSSESEGIPSIERSRKGSSGNASE). Over residues 45–90 (TAASLSKTKSSDDLLAGMAGGVTVTNGVKGKKSTCPSAAPSASAPA) the composition is skewed to low complexity. The segment covering 93-117 (TVENKSKISTGTASSTKRNTSTGNK) has biased composition (polar residues). Composition is skewed to basic and acidic residues over residues 120-131 (SSTRERLRERTR) and 158-171 (TATECDVRMSKSKS). A coiled-coil region spans residues 168-280 (KSKSDNQISD…LNALGFSLEQ (113 aa)). A compositionally biased stretch (polar residues) spans 293-303 (SLSPEITPGNQ). Residues 358–377 (SSDDALDAPSSSESEGIPSI) show a composition bias toward low complexity. Phosphoserine is present on residues serine 384, serine 385, and serine 389. Coiled coils occupy residues 394–449 (ACLT…MESL) and 487–807 (RYME…RGRV). Serine 868, serine 881, and serine 887 each carry phosphoserine. The disordered stretch occupies residues 919 to 1001 (RTSSASRPAS…SRIREERKDP (83 aa)). The span at 946–956 (RSSEEMKRDIS) shows a compositional bias: basic and acidic residues. Low complexity predominate over residues 971 to 990 (TTSPQLSLSSSPTASVTPTT). The region spanning 1011 to 1116 (GSKRNALLKW…YVTAIYKYFE (106 aa)) is the Calponin-homology (CH) domain.

It belongs to the cytospin-A family. As to quaternary structure, may interact with both microtubules and actin cytoskeleton.

Its subcellular location is the cytoplasm. The protein resides in the cytoskeleton. It is found in the spindle. The protein localises to the cell junction. It localises to the gap junction. Its function is as follows. Involved in cytokinesis and spindle organization. May play a role in actin cytoskeleton organization and microtubule stabilization and hence required for proper cell adhesion and migration. This is Cytospin-A (SPECC1L) from Pan troglodytes (Chimpanzee).